The primary structure comprises 192 residues: Adenylate kinase (192 aa).

An ATP-binding site is contributed by 12–17 (GSGKTT). Residues 34–63 (STGDLLRAEVASGSELGKTIDSFISKGNLV) form an NMP region. Residues T35, R40, 61–63 (NLV), 88–91 (GYPR), and Q95 contribute to the AMP site. The segment at 130–136 (GRNRGAD) is LID. R131 contributes to the ATP binding site. AMP-binding residues include R133 and R145. Position 173 (R173) interacts with ATP.

The protein belongs to the adenylate kinase family. Monomer.

The protein resides in the cytoplasm. The enzyme catalyses AMP + ATP = 2 ADP. It participates in purine metabolism; AMP biosynthesis via salvage pathway; AMP from ADP: step 1/1. In terms of biological role, catalyzes the reversible transfer of the terminal phosphate group between ATP and AMP. Plays an important role in cellular energy homeostasis and in adenine nucleotide metabolism. This is Adenylate kinase from Campylobacter jejuni subsp. jejuni serotype O:2 (strain ATCC 700819 / NCTC 11168).